We begin with the raw amino-acid sequence, 192 residues long: Ion-translocating oxidoreductase complex subunit B (192 aa).

The segment at 1-26 is hydrophobic; the sequence is MNTIWIAVAAISLLGLAFGAILGYAS. One can recognise a 4Fe-4S domain in the interval 32–91; that stretch reads EDDPVVEKIDEILPQSQCGQCGYPGCRPYAEAISCNGEKINRCAPGGEAVMLKISELLNV. 12 residues coordinate [4Fe-4S] cluster: Cys-49, Cys-52, Cys-57, Cys-74, Cys-117, Cys-120, Cys-123, Cys-127, Cys-147, Cys-150, Cys-153, and Cys-157. 4Fe-4S ferredoxin-type domains are found at residues 108–137 and 138–167; these read VVAV…GATR and AMHT…LQPV.

The protein belongs to the 4Fe4S bacterial-type ferredoxin family. RnfB subfamily. The complex is composed of six subunits: RsxA, RsxB, RsxC, RsxD, RsxE and RsxG. Requires [4Fe-4S] cluster as cofactor.

The protein localises to the cell inner membrane. Part of a membrane-bound complex that couples electron transfer with translocation of ions across the membrane. Required to maintain the reduced state of SoxR. This is Ion-translocating oxidoreductase complex subunit B from Escherichia fergusonii (strain ATCC 35469 / DSM 13698 / CCUG 18766 / IAM 14443 / JCM 21226 / LMG 7866 / NBRC 102419 / NCTC 12128 / CDC 0568-73).